The following is a 610-amino-acid chain: MAKNLMLWLVIAVVLMSIFQNFSANNINNRKIDYSTFLSDVNQDQVREVHISGREMNIIRKDNGRYITYIPISDPKLLDNLLVKNVKIIGAAPEEQSFFTAIFISWFPMLLLIGVWVFFMRQMQVGGGKGAMSFGKSKARMLPEDQVKITFSDVAGCDEAKEEVQELVEYLKEPSRFQKLGGKIPKGILMVGPPGTGKTLLAKAIAGEAKVPFFTISGSDFVEMFVGVGASRVRDMFEHSRKVAPCIIFIDEIDAVGRQRGAGLGGGHDEREQTLNQMLVEMDGFDGNEGIILIAATNRPDVLDPALLRPGRFDRQIFVALPDIRGREKIIQVHMKKVPLGNNVDPMIIARGTPGFSGADLANLVNEAALFAARNNRDVVMMSDFESAKDKITMGSERRSMVMTEKQKESTAYHEAGHVIVGRLVPEHDPAHKVTIIPRGRALGVTFFLPKDDVLSINKNKLESQISTLYGGRLAEEIIYGVNNVSTGAHNDIKVATNLARNMVTQWGFSKKLGPLLYSEEEGEIFLGRTVTKSKHMSDETARIIDEEVKLLVEKNYNRAKKILEENLDILHAMKDALIKYETINSRQIDDLMKRKSIQSSNICTDDDNN.

Over 1–3 the chain is Cytoplasmic; it reads MAK. Residues 4-24 form a helical membrane-spanning segment; sequence NLMLWLVIAVVLMSIFQNFSA. Residues 25–97 lie on the Extracellular side of the membrane; that stretch reads NNINNRKIDY…IIGAAPEEQS (73 aa). Residues 98-118 traverse the membrane as a helical segment; sequence FFTAIFISWFPMLLLIGVWVF. The Cytoplasmic portion of the chain corresponds to 119–610; sequence FMRQMQVGGG…SNICTDDDNN (492 aa). Residue 192–199 participates in ATP binding; it reads GPPGTGKT. Residue histidine 414 coordinates Zn(2+). Glutamate 415 is a catalytic residue. Residues histidine 418 and aspartate 492 each coordinate Zn(2+).

It in the central section; belongs to the AAA ATPase family. The protein in the C-terminal section; belongs to the peptidase M41 family. In terms of assembly, homohexamer. The cofactor is Zn(2+).

The protein localises to the cell membrane. Its function is as follows. Acts as a processive, ATP-dependent zinc metallopeptidase for both cytoplasmic and membrane proteins. Plays a role in the quality control of integral membrane proteins. The sequence is that of ATP-dependent zinc metalloprotease FtsH from Buchnera aphidicola subsp. Baizongia pistaciae (strain Bp).